A 265-amino-acid chain; its full sequence is 4-hydroxy-tetrahydrodipicolinate reductase (265 aa).

Residues 7–12 (GASGRM) and Asp-33 each bind NAD(+). Arg-34 lines the NADP(+) pocket. NAD(+) contacts are provided by residues 96-98 (GTT) and 120-123 (AANM). The active-site Proton donor/acceptor is His-153. His-154 provides a ligand contact to (S)-2,3,4,5-tetrahydrodipicolinate. Catalysis depends on Lys-157, which acts as the Proton donor. (S)-2,3,4,5-tetrahydrodipicolinate is bound at residue 163–164 (GT).

It belongs to the DapB family.

Its subcellular location is the cytoplasm. The enzyme catalyses (S)-2,3,4,5-tetrahydrodipicolinate + NAD(+) + H2O = (2S,4S)-4-hydroxy-2,3,4,5-tetrahydrodipicolinate + NADH + H(+). It carries out the reaction (S)-2,3,4,5-tetrahydrodipicolinate + NADP(+) + H2O = (2S,4S)-4-hydroxy-2,3,4,5-tetrahydrodipicolinate + NADPH + H(+). It functions in the pathway amino-acid biosynthesis; L-lysine biosynthesis via DAP pathway; (S)-tetrahydrodipicolinate from L-aspartate: step 4/4. Its function is as follows. Catalyzes the conversion of 4-hydroxy-tetrahydrodipicolinate (HTPA) to tetrahydrodipicolinate. The chain is 4-hydroxy-tetrahydrodipicolinate reductase from Burkholderia ambifaria (strain ATCC BAA-244 / DSM 16087 / CCUG 44356 / LMG 19182 / AMMD) (Burkholderia cepacia (strain AMMD)).